The following is a 149-amino-acid chain: CCAAT/enhancer-binding protein gamma (149 aa).

The segment covering 1–12 has biased composition (polar residues); that stretch reads MSKVSQQNSTPG. Residues 1–92 are disordered; sequence MSKVSQQNST…SKQKAQDTLQ (92 aa). Residue K3 forms a Glycyl lysine isopeptide (Lys-Gly) (interchain with G-Cter in SUMO2) linkage. The span at 28–37 shows a compositional bias: low complexity; that stretch reads LQQVPQLVPA. Basic and acidic residues predominate over residues 56 to 72; that stretch reads SPMDRNSDEYRQRRERN. A bZIP domain is found at 62–125; it reads SDEYRQRRER…SVLKDLFLEH (64 aa). The basic motif stretch occupies residues 66-93; sequence RQRRERNNMAVKKSRLKSKQKAQDTLQR. A leucine-zipper region spans residues 97-118; it reads LKEENERLEAKIKLLTKELSVL. The interval 128 to 149 is disordered; the sequence is NLADNVQPSSTENTTNPDKAGQ. Residues 131–149 show a composition bias toward polar residues; the sequence is DNVQPSSTENTTNPDKAGQ.

Belongs to the bZIP family. C/EBP subfamily. As to quaternary structure, binds DNA as a dimer and can form stable heterodimers with CEBPA and CEBPB. Interacts with ZNF638; this interaction increases transcriptional activation.

The protein localises to the nucleus. In terms of biological role, transcription factor that binds to the promoter and the enhancer regions of target genes. Binds to the enhancer element PRE-I (positive regulatory element-I) of the IL-4 gene. Binds to the promoter and the enhancer of the immunoglobulin heavy chain. Binds to GPE1, a cis-acting element in the G-CSF gene promoter. This is CCAAT/enhancer-binding protein gamma (CEBPG) from Bos taurus (Bovine).